A 511-amino-acid chain; its full sequence is Phospho-2-dehydro-3-deoxyheptonate aldolase 2, chloroplastic (511 aa).

The protein belongs to the class-II DAHP synthase family. In terms of tissue distribution, leaves, stems, tuber and roots.

The protein resides in the plastid. It localises to the chloroplast. The catalysed reaction is D-erythrose 4-phosphate + phosphoenolpyruvate + H2O = 7-phospho-2-dehydro-3-deoxy-D-arabino-heptonate + phosphate. It functions in the pathway metabolic intermediate biosynthesis; chorismate biosynthesis; chorismate from D-erythrose 4-phosphate and phosphoenolpyruvate: step 1/7. The sequence is that of Phospho-2-dehydro-3-deoxyheptonate aldolase 2, chloroplastic (SHKB) from Solanum tuberosum (Potato).